The sequence spans 88 residues: Putative septation protein SpoVG (88 aa).

The protein belongs to the SpoVG family.

Its function is as follows. Could be involved in septation. The protein is Putative septation protein SpoVG of Lachnospira eligens (strain ATCC 27750 / DSM 3376 / VPI C15-48 / C15-B4) (Eubacterium eligens).